A 159-amino-acid chain; its full sequence is Ribosomal RNA large subunit methyltransferase H (159 aa).

S-adenosyl-L-methionine-binding positions include Leu-76, Gly-108, and 127 to 132 (FGLLTF).

It belongs to the RNA methyltransferase RlmH family. As to quaternary structure, homodimer.

It localises to the cytoplasm. The catalysed reaction is pseudouridine(1915) in 23S rRNA + S-adenosyl-L-methionine = N(3)-methylpseudouridine(1915) in 23S rRNA + S-adenosyl-L-homocysteine + H(+). In terms of biological role, specifically methylates the pseudouridine at position 1915 (m3Psi1915) in 23S rRNA. This chain is Ribosomal RNA large subunit methyltransferase H, found in Streptococcus thermophilus (strain ATCC BAA-491 / LMD-9).